Here is a 281-residue protein sequence, read N- to C-terminus: Homoserine kinase (281 aa).

83–93 (PVSSGLGSSAA) provides a ligand contact to ATP.

The protein belongs to the GHMP kinase family. Homoserine kinase subfamily.

It is found in the cytoplasm. The enzyme catalyses L-homoserine + ATP = O-phospho-L-homoserine + ADP + H(+). It functions in the pathway amino-acid biosynthesis; L-threonine biosynthesis; L-threonine from L-aspartate: step 4/5. Catalyzes the ATP-dependent phosphorylation of L-homoserine to L-homoserine phosphate. In Thermotoga petrophila (strain ATCC BAA-488 / DSM 13995 / JCM 10881 / RKU-1), this protein is Homoserine kinase.